A 392-amino-acid polypeptide reads, in one-letter code: S-adenosylmethionine synthase (392 aa).

ATP is bound at residue His-15. Asp-17 is a binding site for Mg(2+). Residue Glu-43 participates in K(+) binding. L-methionine is bound by residues Glu-56 and Gln-99. A flexible loop region spans residues 99–109 (QSKDIAQGVDE). Residues 173 to 175 (DGK), 239 to 240 (KF), Asp-248, 254 to 255 (RK), Ala-271, and Lys-275 contribute to the ATP site. Asp-248 is an L-methionine binding site. Lys-279 provides a ligand contact to L-methionine.

The protein belongs to the AdoMet synthase family. As to quaternary structure, homotetramer; dimer of dimers. It depends on Mg(2+) as a cofactor. The cofactor is K(+).

It localises to the cytoplasm. The catalysed reaction is L-methionine + ATP + H2O = S-adenosyl-L-methionine + phosphate + diphosphate. It participates in amino-acid biosynthesis; S-adenosyl-L-methionine biosynthesis; S-adenosyl-L-methionine from L-methionine: step 1/1. Catalyzes the formation of S-adenosylmethionine (AdoMet) from methionine and ATP. The overall synthetic reaction is composed of two sequential steps, AdoMet formation and the subsequent tripolyphosphate hydrolysis which occurs prior to release of AdoMet from the enzyme. This is S-adenosylmethionine synthase from Finegoldia magna (strain ATCC 29328 / DSM 20472 / WAL 2508) (Peptostreptococcus magnus).